Reading from the N-terminus, the 269-residue chain is 3-methyl-2-oxobutanoate hydroxymethyltransferase (269 aa).

Residues Asp-52 and Asp-91 each contribute to the Mg(2+) site. Residues 52–53, Asp-91, and Lys-121 each bind 3-methyl-2-oxobutanoate; that span reads DT. Glu-123 provides a ligand contact to Mg(2+). The Proton acceptor role is filled by Glu-186.

This sequence belongs to the PanB family. In terms of assembly, homodecamer; pentamer of dimers. Mg(2+) is required as a cofactor.

It is found in the cytoplasm. It catalyses the reaction 3-methyl-2-oxobutanoate + (6R)-5,10-methylene-5,6,7,8-tetrahydrofolate + H2O = 2-dehydropantoate + (6S)-5,6,7,8-tetrahydrofolate. Its pathway is cofactor biosynthesis; (R)-pantothenate biosynthesis; (R)-pantoate from 3-methyl-2-oxobutanoate: step 1/2. Its function is as follows. Catalyzes the reversible reaction in which hydroxymethyl group from 5,10-methylenetetrahydrofolate is transferred onto alpha-ketoisovalerate to form ketopantoate. The sequence is that of 3-methyl-2-oxobutanoate hydroxymethyltransferase from Rhodopirellula baltica (strain DSM 10527 / NCIMB 13988 / SH1).